Here is a 304-residue protein sequence, read N- to C-terminus: ATP phosphoribosyltransferase (304 aa).

The protein belongs to the ATP phosphoribosyltransferase family. Long subfamily. Mg(2+) serves as cofactor.

It is found in the cytoplasm. The enzyme catalyses 1-(5-phospho-beta-D-ribosyl)-ATP + diphosphate = 5-phospho-alpha-D-ribose 1-diphosphate + ATP. It functions in the pathway amino-acid biosynthesis; L-histidine biosynthesis; L-histidine from 5-phospho-alpha-D-ribose 1-diphosphate: step 1/9. Feedback inhibited by histidine. Catalyzes the condensation of ATP and 5-phosphoribose 1-diphosphate to form N'-(5'-phosphoribosyl)-ATP (PR-ATP). Has a crucial role in the pathway because the rate of histidine biosynthesis seems to be controlled primarily by regulation of HisG enzymatic activity. In Xanthomonas campestris pv. campestris (strain 8004), this protein is ATP phosphoribosyltransferase.